Here is a 213-residue protein sequence, read N- to C-terminus: Peroxynitrite isomerase 2 (213 aa).

Positions 58-64 (GVWRGEG) match the GXWXGXG motif. 2 residues coordinate heme b: Lys176 and His203.

It belongs to the nitrobindin family. In terms of assembly, homodimer. Heme b is required as a cofactor.

It carries out the reaction peroxynitrite = nitrate. Its pathway is nitrogen metabolism. Functionally, heme-binding protein able to scavenge peroxynitrite and to protect free L-tyrosine against peroxynitrite-mediated nitration, by acting as a peroxynitrite isomerase that converts peroxynitrite to nitrate. Therefore, this protein likely plays a role in peroxynitrite sensing and in the detoxification of reactive nitrogen and oxygen species (RNS and ROS, respectively). Is able to bind nitric oxide (NO) in vitro, but may act as a sensor of peroxynitrite levels in vivo. In Rhodococcus jostii (strain RHA1), this protein is Peroxynitrite isomerase 2.